Consider the following 355-residue polypeptide: uncharacterized protein (355 aa).

It localises to the cytoplasm. This is an uncharacterized protein from Saccharomyces cerevisiae (strain ATCC 204508 / S288c) (Baker's yeast).